A 111-amino-acid polypeptide reads, in one-letter code: MEAKAILRTARISPQKARLVADQVRGLPAERAVNLLKFSDKKAAHLIKKVVESAIANAENNQGADVDELKVQTIMVDEGPTLKRFMARAKGRGTRILKRTSHITVVVGAAK.

Belongs to the universal ribosomal protein uL22 family. In terms of assembly, part of the 50S ribosomal subunit.

Functionally, this protein binds specifically to 23S rRNA; its binding is stimulated by other ribosomal proteins, e.g. L4, L17, and L20. It is important during the early stages of 50S assembly. It makes multiple contacts with different domains of the 23S rRNA in the assembled 50S subunit and ribosome. Its function is as follows. The globular domain of the protein is located near the polypeptide exit tunnel on the outside of the subunit, while an extended beta-hairpin is found that lines the wall of the exit tunnel in the center of the 70S ribosome. This is Large ribosomal subunit protein uL22 from Stenotrophomonas maltophilia (strain R551-3).